A 509-amino-acid polypeptide reads, in one-letter code: tRNA-2-methylthio-N(6)-dimethylallyladenosine synthase (509 aa).

Positions 1 to 15 (MNEQQRLASQQVNSS) are enriched in polar residues. The disordered stretch occupies residues 1–26 (MNEQQRLASQQVNSSTKKEEKDYSKY). The span at 16-25 (TKKEEKDYSK) shows a compositional bias: basic and acidic residues. The MTTase N-terminal domain maps to 66–184 (RKFYIRTYGC…LPYILKDAMF (119 aa)). [4Fe-4S] cluster is bound by residues Cys-75, Cys-111, Cys-145, Cys-221, Cys-225, and Cys-228. The Radical SAM core domain maps to 207–437 (RRGDIKAWVN…NALVNKLAIE (231 aa)). The 64-residue stretch at 440-503 (DRYKGQIVEV…TWSLNGELVE (64 aa)) folds into the TRAM domain.

Belongs to the methylthiotransferase family. MiaB subfamily. As to quaternary structure, monomer. [4Fe-4S] cluster is required as a cofactor.

The protein localises to the cytoplasm. It catalyses the reaction N(6)-dimethylallyladenosine(37) in tRNA + (sulfur carrier)-SH + AH2 + 2 S-adenosyl-L-methionine = 2-methylsulfanyl-N(6)-dimethylallyladenosine(37) in tRNA + (sulfur carrier)-H + 5'-deoxyadenosine + L-methionine + A + S-adenosyl-L-homocysteine + 2 H(+). Its function is as follows. Catalyzes the methylthiolation of N6-(dimethylallyl)adenosine (i(6)A), leading to the formation of 2-methylthio-N6-(dimethylallyl)adenosine (ms(2)i(6)A) at position 37 in tRNAs that read codons beginning with uridine. The sequence is that of tRNA-2-methylthio-N(6)-dimethylallyladenosine synthase from Bacillus cereus (strain ZK / E33L).